The sequence spans 219 residues: Oligoribonuclease (219 aa).

The Exonuclease domain maps to 19-184 (LVWVDLEMTG…ADIVESIREL (166 aa)). Residue tyrosine 141 is part of the active site.

Belongs to the oligoribonuclease family.

It localises to the cytoplasm. In terms of biological role, 3'-to-5' exoribonuclease specific for small oligoribonucleotides. The protein is Oligoribonuclease of Corynebacterium glutamicum (strain R).